Reading from the N-terminus, the 88-residue chain is FXYD domain-containing ion transport regulator 4 (88 aa).

Positions 1–20 (MEEITCAFLLLLAGLPALEA) are cleaved as a signal peptide. Over 21 to 38 (SDPVDKDSPFYYDWESLQ) the chain is Extracellular. A helical transmembrane segment spans residues 39-59 (LGGLIFGGLLCIAGIAMALSG). Residues 60-88 (KCKCRRTHKPSSLPGKATPLIIPGSANTC) lie on the Cytoplasmic side of the membrane.

It belongs to the FXYD family. As to quaternary structure, regulatory subunit of the sodium/potassium-transporting ATPase which is composed of a catalytic alpha subunit, a non-catalytic beta subunit and a regulatory subunit. The regulatory subunit, a member of the FXYD protein family, modulates the enzymatic activity in a tissue- and isoform-specific way by changing affinities of the Na+/K+-ATPase toward Na(+), K(+) or ATP.

The protein resides in the cell membrane. It localises to the basolateral cell membrane. Its function is as follows. Associates with and regulates the activity of the sodium/potassium-transporting ATPase (NKA) which catalyzes the hydrolysis of ATP coupled with the exchange of Na(+) and K(+) ions across the plasma membrane. Increases the apparent affinity of the transporter for Na(+) and increases NKA activity. The chain is FXYD domain-containing ion transport regulator 4 (Fxyd4) from Mus musculus (Mouse).